The sequence spans 353 residues: UDP-N-acetylglucosamine--N-acetylmuramyl-(pentapeptide) pyrophosphoryl-undecaprenol N-acetylglucosamine transferase (353 aa).

Residues 10-12, Asn-124, Ser-183, and Gln-283 contribute to the UDP-N-acetyl-alpha-D-glucosamine site; that span reads TGG.

This sequence belongs to the glycosyltransferase 28 family. MurG subfamily.

The protein localises to the cell inner membrane. The catalysed reaction is di-trans,octa-cis-undecaprenyl diphospho-N-acetyl-alpha-D-muramoyl-L-alanyl-D-glutamyl-meso-2,6-diaminopimeloyl-D-alanyl-D-alanine + UDP-N-acetyl-alpha-D-glucosamine = di-trans,octa-cis-undecaprenyl diphospho-[N-acetyl-alpha-D-glucosaminyl-(1-&gt;4)]-N-acetyl-alpha-D-muramoyl-L-alanyl-D-glutamyl-meso-2,6-diaminopimeloyl-D-alanyl-D-alanine + UDP + H(+). Its pathway is cell wall biogenesis; peptidoglycan biosynthesis. Its function is as follows. Cell wall formation. Catalyzes the transfer of a GlcNAc subunit on undecaprenyl-pyrophosphoryl-MurNAc-pentapeptide (lipid intermediate I) to form undecaprenyl-pyrophosphoryl-MurNAc-(pentapeptide)GlcNAc (lipid intermediate II). The sequence is that of UDP-N-acetylglucosamine--N-acetylmuramyl-(pentapeptide) pyrophosphoryl-undecaprenol N-acetylglucosamine transferase from Helicobacter pylori (strain HPAG1).